The following is a 430-amino-acid chain: Asparagine--tRNA ligase (430 aa).

The protein belongs to the class-II aminoacyl-tRNA synthetase family. As to quaternary structure, homodimer.

It is found in the cytoplasm. It carries out the reaction tRNA(Asn) + L-asparagine + ATP = L-asparaginyl-tRNA(Asn) + AMP + diphosphate + H(+). The polypeptide is Asparagine--tRNA ligase (Staphylococcus aureus (strain MW2)).